We begin with the raw amino-acid sequence, 2175 residues long: Genome polyprotein (2175 aa).

The N-myristoyl glycine; by host moiety is linked to residue Gly-2. The Cytoplasmic portion of the chain corresponds to 2 to 1485 (GAQLSRNTAG…NVNRALAVIQ (1484 aa)). Amphipathic alpha-helix stretches follow at residues 557-574 (ILQNDPGKMLKDAIDKQV) and 560-581 (NDPGKMLKDAIDKQVAGALVAG). Catalysis depends on for protease 2A activity residues His-861 and Asp-879. The Zn(2+) site is built by Cys-896 and Cys-898. The active-site For protease 2A activity is the Cys-950. 2 residues coordinate Zn(2+): Cys-956 and His-958. The membrane-binding stretch occupies residues 1090–1162 (SDNWMKKFTE…EHSSASQERQ (73 aa)). Residues 1090–1228 (SDNWMKKFTE…SPGTGQSLAT (139 aa)) form an oligomerization region. Positions 1111 to 1115 (AAKIS) are RNA-binding. Residues 1194–1352 (EKRVLGAMQF…YKRDGVTLDV (159 aa)) form the SF3 helicase domain. Zn(2+)-binding residues include Cys-1359, Cys-1370, and Cys-1375. Residues 1359 to 1375 (CEDCSPANFKKCMPLIC) form a C4-type; degenerate zinc finger. Residues 1403 to 1410 (ESNRRYNI) are RNA-binding. The tract at residues 1414 to 1419 (LEALFQ) is oligomerization. An intramembrane segment occupies 1486 to 1501 (SVSLIAAVAGTIYIVY). At 1502–2175 (RLFSGMQGPY…ALERKWYDSF (674 aa)) the chain is on the cytoplasmic side. O-(5'-phospho-RNA)-tyrosine is present on Tyr-1511. The region spanning 1532–1710 (GPLFDFGVSL…FAASLLRRYF (179 aa)) is the Peptidase C3 domain. Catalysis depends on for protease 3C activity residues His-1571, Glu-1602, and Cys-1678. The region spanning 1941–2056 (GELFGFDYTA…SYPYEIDASL (116 aa)) is the RdRp catalytic domain. Positions 1947 and 2042 each coordinate Mg(2+).

The protein belongs to the picornaviruses polyprotein family. Interacts with capsid protein VP1 and capsid protein VP3 to form heterotrimeric protomers. In terms of assembly, interacts with capsid protein VP0, and capsid protein VP3 to form heterotrimeric protomers. Five protomers subsequently associate to form pentamers which serve as building blocks for the capsid. Interacts with capsid protein VP2, capsid protein VP3 and capsid protein VP4 following cleavage of capsid protein VP0. As to quaternary structure, interacts with capsid protein VP1 and capsid protein VP3 in the mature capsid. Interacts with capsid protein VP0 and capsid protein VP1 to form heterotrimeric protomers. Five protomers subsequently associate to form pentamers which serve as building blocks for the capsid. Interacts with capsid protein VP4 in the mature capsid. Interacts with protein 2C; this interaction may be important for virion morphogenesis. In terms of assembly, interacts with capsid protein VP1 and capsid protein VP3. As to quaternary structure, homodimer. Homohexamer; forms a hexameric ring structure with 6-fold symmetry characteristic of AAA+ ATPases. Interacts (via N-terminus) with host RTN3 (via reticulon domain); this interaction is important for viral replication. Interacts with capsid protein VP3; this interaction may be important for virion morphogenesis. In terms of assembly, interacts with protein 3CD. As to quaternary structure, homodimer. Interacts with host GBF1. Interacts (via GOLD domain) with host ACBD3 (via GOLD domain); this interaction allows the formation of a viral protein 3A/ACBD3 heterotetramer with a 2:2 stoichiometry, which will stimulate the recruitment of host PI4KB in order to synthesize PI4P at the viral RNA replication sites. Interacts with RNA-directed RNA polymerase. In terms of assembly, interacts with protein 3AB and with RNA-directed RNA polymerase. As to quaternary structure, interacts with Viral protein genome-linked and with protein 3CD. It depends on Mg(2+) as a cofactor. Specific enzymatic cleavages in vivo by the viral proteases yield processing intermediates and the mature proteins. Post-translationally, myristoylation is required for the formation of pentamers during virus assembly. Further assembly of 12 pentamers and a molecule of genomic RNA generates the provirion. In terms of processing, during virion maturation, immature virions are rendered infectious following cleavage of VP0 into VP4 and VP2. This maturation seems to be an autocatalytic event triggered by the presence of RNA in the capsid and it is followed by a conformational change infectious virion. Myristoylation is required during RNA encapsidation and formation of the mature virus particle. Post-translationally, VPg is uridylylated by the polymerase into VPg-pUpU. This acts as a nucleotide-peptide primer for the genomic RNA replication.

The protein localises to the virion. It is found in the host cytoplasm. It localises to the host cytoplasmic vesicle membrane. The protein resides in the host nucleus. The enzyme catalyses a ribonucleoside 5'-triphosphate + H2O = a ribonucleoside 5'-diphosphate + phosphate + H(+). It carries out the reaction Selective cleavage of Tyr-|-Gly bond in the picornavirus polyprotein.. It catalyses the reaction RNA(n) + a ribonucleoside 5'-triphosphate = RNA(n+1) + diphosphate. The catalysed reaction is Selective cleavage of Gln-|-Gly bond in the poliovirus polyprotein. In other picornavirus reactions Glu may be substituted for Gln, and Ser or Thr for Gly.. With respect to regulation, replication or transcription is subject to high level of random mutations by the nucleotide analog ribavirin. In terms of biological role, forms an icosahedral capsid of pseudo T=3 symmetry with capsid proteins VP2 and VP3. The capsid is 300 Angstroms in diameter, composed of 60 copies of each capsid protein and enclosing the viral positive strand RNA genome. Capsid protein VP1 mainly forms the vertices of the capsid. Capsid protein VP1 interacts with host cell receptor to provide virion attachment to target host cells. This attachment induces virion internalization. Tyrosine kinases are probably involved in the entry process. After binding to its receptor, the capsid undergoes conformational changes. Capsid protein VP1 N-terminus (that contains an amphipathic alpha-helix) and capsid protein VP4 are externalized. Together, they shape a pore in the host membrane through which viral genome is translocated to host cell cytoplasm. Its function is as follows. Forms an icosahedral capsid of pseudo T=3 symmetry with capsid proteins VP2 and VP3. The capsid is 300 Angstroms in diameter, composed of 60 copies of each capsid protein and enclosing the viral positive strand RNA genome. Lies on the inner surface of the capsid shell. After binding to the host receptor, the capsid undergoes conformational changes. Capsid protein VP4 is released, Capsid protein VP1 N-terminus is externalized, and together, they shape a pore in the host membrane through which the viral genome is translocated into the host cell cytoplasm. Functionally, component of immature procapsids, which is cleaved into capsid proteins VP4 and VP2 after maturation. Allows the capsid to remain inactive before the maturation step. In terms of biological role, cysteine protease that cleaves viral polyprotein and specific host proteins. It is responsible for the autocatalytic cleavage between the P1 and P2 regions, which is the first cleavage occurring in the polyprotein. Also cleaves the host translation initiation factor EIF4G1, in order to shut down the capped cellular mRNA translation. Inhibits the host nucleus-cytoplasm protein and RNA trafficking by cleaving host members of the nuclear pores. Counteracts stress granule formation probably by antagonizing its assembly or promoting its dissassembly. Its function is as follows. Plays an essential role in the virus replication cycle by acting as a viroporin. Creates a pore in the host endoplasmic reticulum and as a consequence releases Ca2+ in the cytoplasm of infected cell. In turn, high levels of cytoplasmic calcium may trigger membrane trafficking and transport of viral ER-associated proteins to viroplasms, sites of viral genome replication. Induces and associates with structural rearrangements of intracellular membranes. Displays RNA-binding, nucleotide binding and NTPase activities. May play a role in virion morphogenesis and viral RNA encapsidation by interacting with the capsid protein VP3. Functionally, localizes the viral replication complex to the surface of membranous vesicles. Together with protein 3CD binds the Cis-Active RNA Element (CRE) which is involved in RNA synthesis initiation. Acts as a cofactor to stimulate the activity of 3D polymerase, maybe through a nucleid acid chaperone activity. In terms of biological role, localizes the viral replication complex to the surface of membranous vesicles. It inhibits host cell endoplasmic reticulum-to-Golgi apparatus transport and causes the disassembly of the Golgi complex, possibly through GBF1 interaction. This would result in depletion of MHC, trail receptors and IFN receptors at the host cell surface. Plays an essential role in viral RNA replication by recruiting ACBD3 and PI4KB at the viral replication sites, thereby allowing the formation of the rearranged membranous structures where viral replication takes place. Its function is as follows. Acts as a primer for viral RNA replication and remains covalently bound to viral genomic RNA. VPg is uridylylated prior to priming replication into VPg-pUpU. The oriI viral genomic sequence may act as a template for this. The VPg-pUpU is then used as primer on the genomic RNA poly(A) by the RNA-dependent RNA polymerase to replicate the viral genome. During genome replication, the VPg-RNA linkage is removed by the host TDP2, thereby accelerating replication. During the late stage of the replication cycle, host TDP2 is excluded from sites of viral RNA synthesis and encapsidation, allowing for the generation of progeny virions. Involved in the viral replication complex and viral polypeptide maturation. It exhibits protease activity with a specificity and catalytic efficiency that is different from protease 3C. Protein 3CD lacks polymerase activity. Protein 3CD binds to the 5'UTR of the viral genome. Functionally, replicates the viral genomic RNA on the surface of intracellular membranes. May form linear arrays of subunits that propagate along a strong head-to-tail interaction called interface-I. Covalently attaches UMP to a tyrosine of VPg, which is used to prime RNA synthesis. The positive stranded RNA genome is first replicated at virus induced membranous vesicles, creating a dsRNA genomic replication form. This dsRNA is then used as template to synthesize positive stranded RNA genomes. ss(+)RNA genomes are either translated, replicated or encapsidated. In terms of biological role, major viral protease that mediates proteolytic processing of the polyprotein. Cleaves host EIF5B, contributing to host translation shutoff. Also cleaves host PABPC1, contributing to host translation shutoff. Cleaves host NLRP1, triggers host N-glycine-mediated degradation of the autoinhibitory NLRP1 N-terminal fragment. The polypeptide is Genome polyprotein (Bos taurus (Bovine)).